The chain runs to 280 residues: 4-deoxy-L-threo-5-hexosulose-uronate ketol-isomerase 1 (280 aa).

Residues His198, His200, Glu205, and His247 each coordinate Zn(2+).

Belongs to the KduI family. It depends on Zn(2+) as a cofactor.

It carries out the reaction 5-dehydro-4-deoxy-D-glucuronate = 3-deoxy-D-glycero-2,5-hexodiulosonate. The protein operates within glycan metabolism; pectin degradation; 2-dehydro-3-deoxy-D-gluconate from pectin: step 4/5. In terms of biological role, catalyzes the isomerization of 5-dehydro-4-deoxy-D-glucuronate to 3-deoxy-D-glycero-2,5-hexodiulosonate. In Rhizobium meliloti (strain 1021) (Ensifer meliloti), this protein is 4-deoxy-L-threo-5-hexosulose-uronate ketol-isomerase 1 (kduI1).